Reading from the N-terminus, the 127-residue chain is Small ribosomal subunit protein uS13 (127 aa).

A compositionally biased stretch (basic residues) spans 95–118; it reads GLPVRGQRTHTNARTRKGPKKGLV. Positions 95 to 127 are disordered; the sequence is GLPVRGQRTHTNARTRKGPKKGLVRKAAAPAPK.

The protein belongs to the universal ribosomal protein uS13 family. In terms of assembly, part of the 30S ribosomal subunit. Forms a loose heterodimer with protein S19. Forms two bridges to the 50S subunit in the 70S ribosome.

Functionally, located at the top of the head of the 30S subunit, it contacts several helices of the 16S rRNA. In the 70S ribosome it contacts the 23S rRNA (bridge B1a) and protein L5 of the 50S subunit (bridge B1b), connecting the 2 subunits; these bridges are implicated in subunit movement. Contacts the tRNAs in the A and P-sites. This is Small ribosomal subunit protein uS13 from Anaeromyxobacter sp. (strain Fw109-5).